The sequence spans 268 residues: Small ribosomal subunit protein eS1 (268 aa).

A disordered region spans residues 1-21 (MAVGKNKGLSKGGKKGGKKKV).

Belongs to the eukaryotic ribosomal protein eS1 family. In terms of assembly, component of the small ribosomal subunit. Mature ribosomes consist of a small (40S) and a large (60S) subunit. The 40S subunit contains about 33 different proteins and 1 molecule of RNA (18S). The 60S subunit contains about 49 different proteins and 3 molecules of RNA (28S, 5.8S and 5S).

It localises to the cytoplasm. In terms of biological role, essential for oogenesis; required for late follicle cell development. This chain is Small ribosomal subunit protein eS1, found in Drosophila sechellia (Fruit fly).